The primary structure comprises 277 residues: uncharacterized protein (277 aa).

Disordered stretches follow at residues 33 to 168 (KNDN…VTTR) and 210 to 277 (NKLL…PIEF). A compositionally biased stretch (basic and acidic residues) spans 34 to 45 (NDNDERTAHEES). Over residues 86–99 (LKSKSKRKTKKGGS) the composition is skewed to basic residues. Basic and acidic residues-rich tracts occupy residues 100-113 (KPRE…KHIV), 151-168 (AKEL…VTTR), and 216-230 (TNED…NKEK). Residues 231–241 (DRKRRERRTAR) are compositionally biased toward basic residues. Residues 242 to 258 (RKDERKQEKKQEKKQDN) are compositionally biased toward basic and acidic residues. Polar residues predominate over residues 259-271 (KTSQSFPSSTDMN).

The protein localises to the cytoplasm. This is an uncharacterized protein from Saccharomyces cerevisiae (strain ATCC 204508 / S288c) (Baker's yeast).